A 346-amino-acid chain; its full sequence is Annexin A1 (346 aa).

Position 2 is an N-acetylalanine (A2). At S5 the chain carries Phosphoserine; by TRPM7. Q19 is covalently cross-linked (Isoglutamyl lysine isopeptide (Gln-Lys) (interchain with K-?)). Residue Y21 is modified to Phosphotyrosine; by EGFR. A Phosphoserine; by PKC modification is found at S27. S34 and S37 each carry phosphoserine. Residue T41 is modified to Phosphothreonine. Annexin repeat units follow at residues 42 to 113 (FNPS…ALLK), 114 to 185 (TPAQ…SLAK), 197 to 269 (DLAD…AIVK), and 273 to 344 (SKPA…ALCG). The residue at position 58 (K58) is an N6-acetyllysine. Residues G59, V60, E62, K97, L100, E105, M127, G129, G131, T132, and E134 each coordinate Ca(2+). At T136 the chain carries Phosphothreonine. Ca(2+)-binding residues include D171, G210, and R213. K214 participates in a covalent cross-link: Glycyl lysine isopeptide (Lys-Gly) (interchain with G-Cter in SUMO1); alternate. Residue K214 forms a Glycyl lysine isopeptide (Lys-Gly) (interchain with G-Cter in SUMO2); alternate linkage. G215 provides a ligand contact to Ca(2+). At K239 the chain carries N6-acetyllysine. Residues D253, E255, and L256 each coordinate Ca(2+). Residue K257 forms a Glycyl lysine isopeptide (Lys-Gly) (interchain with G-Cter in SUMO1) linkage. Positions 261, 286, 288, and 290 each coordinate Ca(2+). Residue K312 is modified to N6-acetyllysine. Residues C324 and C343 are joined by a disulfide bond. L328, E330, and T331 together coordinate Ca(2+). A Glycyl lysine isopeptide (Lys-Gly) (interchain with G-Cter in SUMO1) cross-link involves residue K332. E336 serves as a coordination point for Ca(2+).

This sequence belongs to the annexin family. In terms of assembly, homodimer; non-covalently linked. Homodimer; linked by transglutamylation. Homodimers linked by transglutamylation are observed in placenta, but not in other tissues. Interacts with S100A11. Heterotetramer, formed by two molecules each of S100A11 and ANXA1. Interacts with DYSF. Interacts with EGFR. Phosphorylated by protein kinase C, EGFR and TRPM7. Phosphorylated in response to EGF treatment. Post-translationally, sumoylated. In terms of processing, proteolytically cleaved by cathepsin CTSG to release the active N-terminal peptide Ac2-26. Detected in resting neutrophils. Detected in peripheral blood T-cells. Detected in extracellular vesicles in blood serum from patients with inflammatory bowel disease, but not in serum from healthy donors. Detected in placenta (at protein level). Detected in liver.

The protein localises to the nucleus. Its subcellular location is the cytoplasm. It is found in the cell projection. It localises to the cilium. The protein resides in the cell membrane. The protein localises to the membrane. Its subcellular location is the endosome membrane. It is found in the basolateral cell membrane. It localises to the apical cell membrane. The protein resides in the lateral cell membrane. The protein localises to the secreted. Its subcellular location is the extracellular space. It is found in the extracellular exosome. It localises to the cytoplasmic vesicle. The protein resides in the secretory vesicle lumen. The protein localises to the phagocytic cup. Its subcellular location is the early endosome. It is found in the cytoplasmic vesicle membrane. In terms of biological role, plays important roles in the innate immune response as effector of glucocorticoid-mediated responses and regulator of the inflammatory process. Has anti-inflammatory activity. Plays a role in glucocorticoid-mediated down-regulation of the early phase of the inflammatory response. Contributes to the adaptive immune response by enhancing signaling cascades that are triggered by T-cell activation, regulates differentiation and proliferation of activated T-cells. Promotes the differentiation of T-cells into Th1 cells and negatively regulates differentiation into Th2 cells. Has no effect on unstimulated T cells. Negatively regulates hormone exocytosis via activation of the formyl peptide receptors and reorganization of the actin cytoskeleton. Has high affinity for Ca(2+) and can bind up to eight Ca(2+) ions. Displays Ca(2+)-dependent binding to phospholipid membranes. Plays a role in the formation of phagocytic cups and phagosomes. Plays a role in phagocytosis by mediating the Ca(2+)-dependent interaction between phagosomes and the actin cytoskeleton. Its function is as follows. Functions at least in part by activating the formyl peptide receptors and downstream signaling cascades. Promotes chemotaxis of granulocytes and monocytes via activation of the formyl peptide receptors. Promotes rearrangement of the actin cytoskeleton, cell polarization and cell migration. Promotes resolution of inflammation and wound healing. Acts via neutrophil N-formyl peptide receptors to enhance the release of CXCL2. The polypeptide is Annexin A1 (ANXA1) (Homo sapiens (Human)).